The following is a 104-amino-acid chain: Large ribosomal subunit protein uL24 (104 aa).

This sequence belongs to the universal ribosomal protein uL24 family. In terms of assembly, part of the 50S ribosomal subunit.

Functionally, one of two assembly initiator proteins, it binds directly to the 5'-end of the 23S rRNA, where it nucleates assembly of the 50S subunit. One of the proteins that surrounds the polypeptide exit tunnel on the outside of the subunit. This chain is Large ribosomal subunit protein uL24, found in Citrobacter koseri (strain ATCC BAA-895 / CDC 4225-83 / SGSC4696).